The sequence spans 484 residues: Adenylosuccinate lyase (484 aa).

Ala2 is modified (N-acetylalanine). Substrate-binding positions include 20–21 (RY), 85–87 (RHD), and 111–112 (TS). Residue Lys147 is modified to N6-acetyllysine. His159 (proton donor/acceptor) is an active-site residue. A substrate-binding site is contributed by Gln241. Residue Ser289 is the Proton donor/acceptor of the active site. At Lys295 the chain carries N6-acetyllysine. Positions 303, 329, 334, and 338 each coordinate substrate. Lys415 is covalently cross-linked (Glycyl lysine isopeptide (Lys-Gly) (interchain with G-Cter in SUMO1)).

This sequence belongs to the lyase 1 family. Adenylosuccinate lyase subfamily. Homotetramer. Residues from neighboring subunits contribute catalytic and substrate-binding residues to each active site.

It carries out the reaction N(6)-(1,2-dicarboxyethyl)-AMP = fumarate + AMP. It catalyses the reaction (2S)-2-[5-amino-1-(5-phospho-beta-D-ribosyl)imidazole-4-carboxamido]succinate = 5-amino-1-(5-phospho-beta-D-ribosyl)imidazole-4-carboxamide + fumarate. The protein operates within purine metabolism; AMP biosynthesis via de novo pathway; AMP from IMP: step 2/2. Its pathway is purine metabolism; IMP biosynthesis via de novo pathway; 5-amino-1-(5-phospho-D-ribosyl)imidazole-4-carboxamide from 5-amino-1-(5-phospho-D-ribosyl)imidazole-4-carboxylate: step 2/2. Its function is as follows. Catalyzes two non-sequential steps in de novo AMP synthesis: converts (S)-2-(5-amino-1-(5-phospho-D-ribosyl)imidazole-4-carboxamido)succinate (SAICAR) to fumarate plus 5-amino-1-(5-phospho-D-ribosyl)imidazole-4-carboxamide, and thereby also contributes to de novo IMP synthesis, and converts succinyladenosine monophosphate (SAMP) to AMP and fumarate. The sequence is that of Adenylosuccinate lyase (Adsl) from Mus musculus (Mouse).